Reading from the N-terminus, the 498-residue chain is Ammonium transporter 1 member 1 (498 aa).

11 consecutive transmembrane segments (helical) span residues 39 to 59 (LLFS…LCAG), 74 to 94 (VLDA…FAFG), 120 to 140 (FFLF…GSIA), 148 to 168 (YLIY…HWIW), 192 to 212 (FAGS…GALI), 236 to 256 (LVVL…PGSF), 274 to 296 (SGVG…TTLF), 307 to 327 (VVDV…GCSV), 331 to 351 (WAAI…NALA), 360 to 380 (LEAA…TALF), and 411 to 431 (VIQI…LFYG).

This sequence belongs to the ammonia transporter channel (TC 1.A.11.2) family. In terms of tissue distribution, expressed in roots and shoots.

The protein resides in the membrane. Its function is as follows. Ammonium transporter probably involved in ammonium uptake from the soil. The chain is Ammonium transporter 1 member 1 (AMT1-1) from Oryza sativa subsp. japonica (Rice).